We begin with the raw amino-acid sequence, 480 residues long: MEVAPEQPRWMAHPAVLNAQHPDSHHPGLAHNYMEPAQLLPPDEVDVFFNHLDSQGNPYYANPAHARARVSYSPAHARLTGGQMCRPHLLHSPGLPWLDGGKAALSAAAAHHHSPWTVSPFSKTPLHPSAAGAPGGPLSVYPGAAGGSGGGSGSSVASLTPTAAHSGSHLFGFPPTPPKEVSPDPSTTGAASPASPSAGGSVARGEDKDGVKYQVSLSESMKMEGGSPLRPGLAPMGTQPATHHPIPTYPSYVPASAHEYGSGLFHPGGFLGGPASSFTPKQRSKARSCSEGRECVNCGATATPLWRRDGTGHYLCNACGLYHKMNGQNRPLIKPKRRLSAARRAGTCCANCQTTTTTLWRRNANGDPVCNACGLYYKLHNVNRPLTMKKEGIQTRNRKMSSKSKKSKKGAECFEELSKCMQEKSSPFSAAALAGHMAPVGHLPPFSHSGHILPTPTPIHPSSSLSFGHPHPSSMVTAMG.

Ser-73 carries the post-translational modification Phosphoserine. The residue at position 86 (Arg-86) is an Asymmetric dimethylarginine. The interval 166–208 (SGSHLFGFPPTPPKEVSPDPSTTGAASPASPSAGGSVARGEDK) is disordered. A compositionally biased stretch (low complexity) spans 183 to 201 (PDPSTTGAASPASPSAGGS). Position 192 is a phosphoserine (Ser-192). 2 consecutive GATA-type zinc fingers follow at residues 295–319 (CVNCGATATPLWRRDGTGHYLCNAC) and 349–373 (CANCQTTTTTLWRRNANGDPVCNAC). Residue Lys-389 forms a Glycyl lysine isopeptide (Lys-Gly) (interchain with G-Cter in SUMO2) linkage. A disordered region spans residues 457 to 480 (TPIHPSSSLSFGHPHPSSMVTAMG).

In terms of assembly, interacts with BRD3. Interacts with AR and CCAR1. Interacts with MDFIC.

Its subcellular location is the nucleus. In terms of biological role, transcriptional activator which regulates endothelin-1 gene expression in endothelial cells. Binds to the consensus sequence 5'-AGATAG-3'. Plays an important role in the regulation of phagocytosis in alveolar macrophages, particularly during P.carinii infection. The polypeptide is Endothelial transcription factor GATA-2 (Rattus norvegicus (Rat)).